The sequence spans 274 residues: 3-methyl-2-oxobutanoate hydroxymethyltransferase (274 aa).

Positions 44 and 83 each coordinate Mg(2+). 3-methyl-2-oxobutanoate contacts are provided by residues 44–45 (DS), D83, and K113. E115 contacts Mg(2+). The active-site Proton acceptor is the E182.

The protein belongs to the PanB family. Homodecamer; pentamer of dimers. Requires Mg(2+) as cofactor.

It localises to the cytoplasm. It carries out the reaction 3-methyl-2-oxobutanoate + (6R)-5,10-methylene-5,6,7,8-tetrahydrofolate + H2O = 2-dehydropantoate + (6S)-5,6,7,8-tetrahydrofolate. It functions in the pathway cofactor biosynthesis; (R)-pantothenate biosynthesis; (R)-pantoate from 3-methyl-2-oxobutanoate: step 1/2. Functionally, catalyzes the reversible reaction in which hydroxymethyl group from 5,10-methylenetetrahydrofolate is transferred onto alpha-ketoisovalerate to form ketopantoate. The sequence is that of 3-methyl-2-oxobutanoate hydroxymethyltransferase from Campylobacter jejuni (strain RM1221).